The sequence spans 320 residues: Cyclin-H (320 aa).

Residue S5 is modified to Phosphoserine; by CDK8. S132 carries the phosphoserine modification. S304 carries the phosphoserine; by CDK8 modification.

Belongs to the cyclin family. Cyclin C subfamily. Associates primarily with CDK7 and MAT1 to form the CAK complex. CAK can further associate with the core-TFIIH to form the TFIIH basal transcription factor.

The protein localises to the nucleus. Regulates CDK7, the catalytic subunit of the CDK-activating kinase (CAK) enzymatic complex. CAK activates the cyclin-associated kinases CDK1, CDK2, CDK4 and CDK6 by threonine phosphorylation. CAK complexed to the core-TFIIH basal transcription factor activates RNA polymerase II by serine phosphorylation of the repetitive C-terminal domain (CTD) of its large subunit (POLR2A), allowing its escape from the promoter and elongation of the transcripts. Involved in cell cycle control and in RNA transcription by RNA polymerase II. Its expression and activity are constant throughout the cell cycle. The chain is Cyclin-H (CCNH) from Bos taurus (Bovine).